The chain runs to 376 residues: MLDPARLDNPAVIFDNGSGLCKVGISGEIEPRHVINSVVGHPKFNIPSARSNRKRYFVGEEAQCMYDGLYLHYPIERGLVTRWDDMEKLWKDLFEWELGVKPNEQPVFMTEPSLNPQETREKTTEIMFEKFNVPALYLCNHAVGALCASACITGLVLDSGDGVTCTVPVYEGYSLPHAITKLYVAGRDITEHLTRLLLAKGYTFPCILNKAVVDDIKEKLCTVSLGYKDTEKNCQQFLRKYTLPDGNTIQMSDHLCQVPEVLFTPDHLGIHDLGISKMVCNSIMNCDTDIQENLFAEIVLSGGTTMFPGLQDRLLKELEDLAFEGTPIKITASSDRCYSAWIGGSVMTSMTTFKQMWVTAEDFKEYGAFVVQRKCF.

It belongs to the actin family.

The protein resides in the cytoplasm. It is found in the cytoskeleton. Its subcellular location is the nucleus. The protein localises to the cytoplasmic vesicle. It localises to the secretory vesicle. The protein resides in the acrosome. In terms of biological role, negatively regulates the Hedgehog (SHH) signaling. Binds to the promoter of the SHH signaling mediator, GLI1, and inhibits its expression. This chain is Actin-related protein T1 (Actrt1), found in Mus musculus (Mouse).